The following is a 180-amino-acid chain: Ribulose bisphosphate carboxylase small subunit 1A, chloroplastic (180 aa).

A chloroplast-targeting transit peptide spans 1-54 (MASSMLSSATMVASPAQATMVAPFNGLKSSAAFPATRKANNDITSITSNGGRVN). At Ser-113 the chain carries Phosphoserine.

The protein belongs to the RuBisCO small chain family. In terms of assembly, heterohexadecamer of 8 large and 8 small subunits.

The protein localises to the plastid. The protein resides in the chloroplast membrane. Its subcellular location is the chloroplast stroma. RuBisCO catalyzes two reactions: the carboxylation of D-ribulose 1,5-bisphosphate, the primary event in carbon dioxide fixation, as well as the oxidative fragmentation of the pentose substrate. Both reactions occur simultaneously and in competition at the same active site. Although the small subunit is not catalytic it is essential for maximal activity. This chain is Ribulose bisphosphate carboxylase small subunit 1A, chloroplastic (RBCS-1A), found in Arabidopsis thaliana (Mouse-ear cress).